We begin with the raw amino-acid sequence, 352 residues long: 4-hydroxy-2-oxovalerate aldolase 5 (352 aa).

One can recognise a Pyruvate carboxyltransferase domain in the interval 9–261; sequence IRVTDSSLRD…RTGIDTLKII (253 aa). 17 to 18 serves as a coordination point for substrate; it reads RD. Residue aspartate 18 coordinates Mn(2+). Histidine 21 (proton acceptor) is an active-site residue. The substrate site is built by serine 171 and histidine 200. Residues histidine 200 and histidine 202 each contribute to the Mn(2+) site. A substrate-binding site is contributed by tyrosine 291.

It belongs to the 4-hydroxy-2-oxovalerate aldolase family.

The enzyme catalyses (S)-4-hydroxy-2-oxopentanoate = acetaldehyde + pyruvate. The chain is 4-hydroxy-2-oxovalerate aldolase 5 from Rhodococcus opacus (strain B4).